The following is a 761-amino-acid chain: Prolyl oligopeptidase A (761 aa).

Active-site charge relay system residues include Ser606, Asp690, and His726.

Belongs to the peptidase S9A family. In terms of assembly, monomer.

It catalyses the reaction Hydrolysis of Pro-|-Xaa &gt;&gt; Ala-|-Xaa in oligopeptides.. Its function is as follows. Housekeeping prolyl oligopeptidase (POP) that behaves like a conventional POP by cleaving peptide bonds on the C-terminal side of prolyl residues within peptides that are up to approximately 30 amino acids long. This Amanita bisporigera (Destroying angel) protein is Prolyl oligopeptidase A.